The primary structure comprises 147 residues: Protein archease (147 aa).

Asp17, Asp146, and Ile147 together coordinate Ca(2+).

It belongs to the archease family.

Its function is as follows. Activates the tRNA-splicing ligase complex by facilitating the enzymatic turnover of catalytic subunit RtcB. Acts by promoting the guanylylation of RtcB, a key intermediate step in tRNA ligation. Can also alter the NTP specificity of RtcB such that ATP, dGTP or ITP is used efficiently. This chain is Protein archease, found in Pyrobaculum neutrophilum (strain DSM 2338 / JCM 9278 / NBRC 100436 / V24Sta) (Thermoproteus neutrophilus).